The primary structure comprises 397 residues: Major capsid protein (397 aa).

A disordered region spans residues 1–24 (MAAPDPYKPGKYNDPAGGVESSIG).

Its subcellular location is the virion. In terms of biological role, assembles to form an icosahedral capsid. This Pseudomonas phage KPP21 protein is Major capsid protein.